The primary structure comprises 636 residues: Chaperone protein HtpG (636 aa).

An a; substrate-binding region spans residues M1–R344. The interval E345–Q561 is b. A c region spans residues L562–A636.

This sequence belongs to the heat shock protein 90 family. In terms of assembly, homodimer.

It is found in the cytoplasm. Its function is as follows. Molecular chaperone. Has ATPase activity. In Xylella fastidiosa (strain Temecula1 / ATCC 700964), this protein is Chaperone protein HtpG.